Consider the following 518-residue polypeptide: Hyccin (518 aa).

Disordered regions lie at residues 385 to 410 and 466 to 492; these read GLRR…MDQL and VFSG…EGVA. A compositionally biased stretch (basic and acidic residues) spans 393–403; sequence SSKEKDKEKDA. Polar residues predominate over residues 466–484; it reads VFSGNQPSSRASSPTSNHV.

This sequence belongs to the Hyccin family. As to quaternary structure, component of a phosphatidylinositol 4-kinase (PI4K) complex.

The protein localises to the cytoplasm. Its subcellular location is the cytosol. The protein resides in the cell membrane. In terms of biological role, component of a complex required to localize phosphatidylinositol 4-kinase (PI4K) to the plasma membrane. The complex acts as a regulator of phosphatidylinositol 4-phosphate (PtdIns(4)P) synthesis. In Danio rerio (Zebrafish), this protein is Hyccin (hycc1).